The following is a 62-amino-acid chain: UPF0434 protein Smed_3047 (62 aa).

This sequence belongs to the UPF0434 family.

The protein is UPF0434 protein Smed_3047 of Sinorhizobium medicae (strain WSM419) (Ensifer medicae).